The primary structure comprises 338 residues: UbiA prenyltransferase domain-containing protein 1 (338 aa).

Residue A2 is modified to N-acetylalanine. 8 helical membrane-spanning segments follow: residues 83 to 103, 134 to 154, 160 to 180, 188 to 208, 209 to 229, 245 to 267, 277 to 297, and 315 to 335; these read LLVG…LVNT, FGVF…YLSP, LALI…GIGF, LIIL…IQVG, SLAI…EAIL, IVTL…LLFL, THCT…FSLE, and LNLL…AGSL.

Belongs to the UbiA prenyltransferase family. In terms of assembly, interacts with HMGCR and SOAT1. As to expression, ubiquitously expressed.

It is found in the endoplasmic reticulum membrane. It localises to the golgi apparatus membrane. The protein resides in the mitochondrion membrane. The protein localises to the cytoplasm. Its subcellular location is the nucleus. The enzyme catalyses menadiol + (2E,6E,10E)-geranylgeranyl diphosphate = menaquinol-4 + diphosphate. It catalyses the reaction all-trans-decaprenyl diphosphate + 4-hydroxybenzoate = 4-hydroxy-3-(all-trans-decaprenyl)benzoate + diphosphate. It participates in quinol/quinone metabolism; menaquinone biosynthesis. Its pathway is cofactor biosynthesis; ubiquinone biosynthesis. Prenyltransferase that mediates the formation of menaquinone-4 (MK-4) and coenzyme Q10. MK-4 is a vitamin K2 isoform present at high concentrations in the brain, kidney and pancreas, and is required for endothelial cell development. Mediates the conversion of phylloquinone (PK) into MK-4, probably by cleaving the side chain of phylloquinone (PK) to release 2-methyl-1,4-naphthoquinone (menadione; K3) and then prenylating it with geranylgeranyl pyrophosphate (GGPP) to form MK-4. Also plays a role in cardiovascular development independently of MK-4 biosynthesis, by acting as a coenzyme Q10 biosynthetic enzyme: coenzyme Q10, also named ubiquinone, plays an important antioxidant role in the cardiovascular system. Mediates biosynthesis of coenzyme Q10 in the Golgi membrane, leading to protect cardiovascular tissues from NOS3/eNOS-dependent oxidative stress. This chain is UbiA prenyltransferase domain-containing protein 1, found in Homo sapiens (Human).